The primary structure comprises 287 residues: Shikimate kinase (287 aa).

87–97 contributes to the ATP binding site; that stretch reads PLASGLKSSSA.

Belongs to the GHMP kinase family. Archaeal shikimate kinase subfamily.

The protein localises to the cytoplasm. It catalyses the reaction shikimate + ATP = 3-phosphoshikimate + ADP + H(+). It functions in the pathway metabolic intermediate biosynthesis; chorismate biosynthesis; chorismate from D-erythrose 4-phosphate and phosphoenolpyruvate: step 5/7. This chain is Shikimate kinase, found in Methanococcoides burtonii (strain DSM 6242 / NBRC 107633 / OCM 468 / ACE-M).